Here is a 437-residue protein sequence, read N- to C-terminus: GTPase Obg (437 aa).

An Obg domain is found at 2–160 (SLFLDTARIE…KILLLELRVL (159 aa)). The 178-residue stretch at 161 to 338 (ADVGLVGFPS…LLARTSELLA (178 aa)) folds into the OBG-type G domain. Residues 167-174 (GFPSVGKS), 192-196 (FTTIT), 214-217 (DMPG), 284-287 (NKMD), and 319-321 (SGL) contribute to the GTP site. Mg(2+) contacts are provided by serine 174 and threonine 194. An OCT domain is found at 359–437 (GFEEEEKPFK…IQKFEFEFVD (79 aa)).

Belongs to the TRAFAC class OBG-HflX-like GTPase superfamily. OBG GTPase family. Monomer. It depends on Mg(2+) as a cofactor.

Its subcellular location is the cytoplasm. Its function is as follows. An essential GTPase which binds GTP, GDP and possibly (p)ppGpp with moderate affinity, with high nucleotide exchange rates and a fairly low GTP hydrolysis rate. Plays a role in control of the cell cycle, stress response, ribosome biogenesis and in those bacteria that undergo differentiation, in morphogenesis control. The protein is GTPase Obg of Lactococcus lactis subsp. lactis (strain IL1403) (Streptococcus lactis).